Here is a 588-residue protein sequence, read N- to C-terminus: Adenine deaminase (588 aa).

Belongs to the metallo-dependent hydrolases superfamily. Adenine deaminase family. Mn(2+) serves as cofactor.

It catalyses the reaction adenine + H2O + H(+) = hypoxanthine + NH4(+). The chain is Adenine deaminase from Desulforamulus reducens (strain ATCC BAA-1160 / DSM 100696 / MI-1) (Desulfotomaculum reducens).